The sequence spans 324 residues: Histidine N-acetyltransferase (324 aa).

One can recognise an N-acetyltransferase domain in the interval 15–151; sequence FEFVLAAEKE…GILLLSFNAP (137 aa).

The catalysed reaction is L-histidine + acetyl-CoA = N(alpha)-acetyl-L-histidine + CoA + H(+). Its function is as follows. Enzyme responsible for the N-acetyl-histidine (NAH) synthesis, which is a major constituent of brain and lens of ectothermic vertebrates. This is Histidine N-acetyltransferase (hisat) from Xenopus tropicalis (Western clawed frog).